The chain runs to 264 residues: 3-methyl-2-oxobutanoate hydroxymethyltransferase (264 aa).

Mg(2+)-binding residues include aspartate 45 and aspartate 84. Residues 45–46 (DS), aspartate 84, and lysine 112 contribute to the 3-methyl-2-oxobutanoate site. Glutamate 114 lines the Mg(2+) pocket. The active-site Proton acceptor is glutamate 181.

The protein belongs to the PanB family. As to quaternary structure, homodecamer; pentamer of dimers. Mg(2+) is required as a cofactor.

It is found in the cytoplasm. It catalyses the reaction 3-methyl-2-oxobutanoate + (6R)-5,10-methylene-5,6,7,8-tetrahydrofolate + H2O = 2-dehydropantoate + (6S)-5,6,7,8-tetrahydrofolate. The protein operates within cofactor biosynthesis; (R)-pantothenate biosynthesis; (R)-pantoate from 3-methyl-2-oxobutanoate: step 1/2. Its function is as follows. Catalyzes the reversible reaction in which hydroxymethyl group from 5,10-methylenetetrahydrofolate is transferred onto alpha-ketoisovalerate to form ketopantoate. The chain is 3-methyl-2-oxobutanoate hydroxymethyltransferase from Shewanella sediminis (strain HAW-EB3).